Here is a 730-residue protein sequence, read N- to C-terminus: Protein groucho (730 aa).

Residues 144–411 (QVPGGPPQPM…GKPAYSFHMN (268 aa)) are disordered. Residues 198–233 (AEERLRNSVSPADREKYRTRSPLDIENDSKRRKDEK) are compositionally biased toward basic and acidic residues. A phosphoserine mark is found at Ser-205, Ser-207, and Ser-218. The CCN domain stretch occupies residues 206-267 (VSPADREKYR…SPRPNGEHVS (62 aa)). A Nuclear localization signal motif is present at residues 227–230 (KRRK). Phosphoserine; by CK2 is present on Ser-242. The span at 254–283 (MESHSPRPNGEHVSMEVRDRESLNGERLEK) shows a compositional bias: basic and acidic residues. Ser-258 carries the post-translational modification Phosphoserine; by CDC2. The segment at 262–425 (NGEHVSMEVR…LQPVPFPPDA (164 aa)) is binding to basic helix-loop-helix domain. Ser-267 carries the phosphoserine modification. Low complexity-rich tracts occupy residues 296 to 308 (SRSG…STPS), 322 to 345 (AKAR…QMMP), and 353 to 362 (YPGAPYQRPA). Phosphothreonine occurs at positions 326 and 328. Pro residues predominate over residues 366 to 382 (QRPPSDPAYGRPPPMPY). WD repeat units lie at residues 442 to 480 (SHGE…NKNP), 488 to 527 (QRDN…PRIK), 532 to 571 (SAAP…LVRQ), 574 to 613 (GHTD…QLQQ), 615 to 654 (DFSS…KYQL), 656 to 695 (LHES…SIFQ), and 697 to 730 (KETS…EVIY).

It belongs to the WD repeat Groucho/TLE family. As to quaternary structure, forms a complex with the hairy/Enhancer of split/deadpan family of basic helix-loop-helix proteins in order to repress transcription. Its activity in regulating transcription depends on other proteins as it lacks a DNA-binding motif. Interacts with hairy/hry (via WRPW motif). In terms of processing, ubiquitinated by XIAP/BIRC4. Ubiquitinated by hyd in response to Wnt signaling, leading to degradation by the proteasome.

The protein localises to the nucleus. Its function is as follows. Transcriptional corepressor that regulates transcription when recruited to specific target DNA by hairy-related bHLH proteins. Maternally required for neurogenesis; in the segregation of the neuroectoderm. Directly or indirectly interacts with Notch and Delta. In Drosophila melanogaster (Fruit fly), this protein is Protein groucho (gro).